The following is a 736-amino-acid chain: Gephyrin (736 aa).

An MPT Mo-transferase region spans residues 14-166 (QIRVGVLTVS…FILPALPHAI (153 aa)). An interaction with GABARAP region spans residues 140-316 (LIINLPGSKK…VDITKVARRH (177 aa)). Disordered stretches follow at residues 181 to 232 (DELE…DSSS) and 260 to 290 (TASL…PKVQ). Over residues 187 to 199 (PSPPPPLSPPPTT) the composition is skewed to pro residues. Phosphoserine is present on residues Ser188 and Ser194. Thr198 is subject to Phosphothreonine. Position 200 is a phosphoserine (Ser200). The S-palmitoyl cysteine moiety is linked to residue Cys212. Over residues 261–290 (ASLSTTPSESPRAQATSRLSTASCPTPKVQ) the composition is skewed to polar residues. Position 262 is a phosphoserine (Ser262). Residues Thr265 and Thr266 each carry the phosphothreonine modification. 2 positions are modified to phosphoserine: Ser268 and Ser270. Residue Cys284 is the site of S-palmitoyl cysteine attachment. Position 305 is a phosphoserine (Ser305). Positions 326 to 736 (MDKAFITVLE…VVDVMVIGRL (411 aa)) are MPT adenylyltransferase.

It in the N-terminal section; belongs to the MoaB/Mog family. In the C-terminal section; belongs to the MoeA family. As to quaternary structure, homotrimer, homodimer and homooligomer. Interacts with GABARAP. Interacts with SRGAP2 (via SH3 domain). Interacts with GABRA3. Interacts with GLRB. GABRA3 and GLRB occupy overlapping binding sites. Interacts with ARHGAP32; IQSEC3, INSYN1 and INSYN2A. The cofactor is Mg(2+). Palmitoylated. Palmitoylation is stimulated by GABA type A receptors activity. Palmitoylation by ZDHHC12 regulates clustering at synapses.

The protein localises to the postsynaptic cell membrane. Its subcellular location is the cell membrane. It is found in the cytoplasm. It localises to the cytosol. The protein resides in the cytoskeleton. The protein localises to the cell projection. Its subcellular location is the dendrite. It is found in the postsynaptic density. The catalysed reaction is molybdopterin + ATP + H(+) = adenylyl-molybdopterin + diphosphate. The enzyme catalyses adenylyl-molybdopterin + molybdate = Mo-molybdopterin + AMP + H(+). It participates in cofactor biosynthesis; molybdopterin biosynthesis. Inhibited by copper and tungsten. Functionally, microtubule-associated protein involved in membrane protein-cytoskeleton interactions. It is thought to anchor the inhibitory glycine receptor (GLYR) to subsynaptic microtubules. Acts as a major instructive molecule at inhibitory synapses, where it also clusters GABA type A receptors. In terms of biological role, also has a catalytic activity and catalyzes two steps in the biosynthesis of the molybdenum cofactor. In the first step, molybdopterin is adenylated. Subsequently, molybdate is inserted into adenylated molybdopterin and AMP is released. The chain is Gephyrin from Homo sapiens (Human).